The primary structure comprises 360 residues: Peptide chain release factor 1 (360 aa).

The residue at position 235 (Gln-235) is an N5-methylglutamine. Positions 291-308 (ASERRNLLGTGDRSDRNR) are enriched in basic and acidic residues. The disordered stretch occupies residues 291 to 312 (ASERRNLLGTGDRSDRNRTYNF).

This sequence belongs to the prokaryotic/mitochondrial release factor family. Methylated by PrmC. Methylation increases the termination efficiency of RF1.

It is found in the cytoplasm. Peptide chain release factor 1 directs the termination of translation in response to the peptide chain termination codons UAG and UAA. This chain is Peptide chain release factor 1, found in Yersinia pseudotuberculosis serotype I (strain IP32953).